The following is a 104-amino-acid chain: Large ribosomal subunit protein uL24 (104 aa).

It belongs to the universal ribosomal protein uL24 family. In terms of assembly, part of the 50S ribosomal subunit.

One of two assembly initiator proteins, it binds directly to the 5'-end of the 23S rRNA, where it nucleates assembly of the 50S subunit. In terms of biological role, one of the proteins that surrounds the polypeptide exit tunnel on the outside of the subunit. The protein is Large ribosomal subunit protein uL24 of Shigella flexneri.